The chain runs to 207 residues: Ribosomal RNA small subunit methyltransferase G (207 aa).

S-adenosyl-L-methionine contacts are provided by residues glycine 77, phenylalanine 82, 100 to 102 (ERS), and arginine 141.

It belongs to the methyltransferase superfamily. RNA methyltransferase RsmG family.

The protein resides in the cytoplasm. Functionally, specifically methylates the N7 position of a guanine in 16S rRNA. This is Ribosomal RNA small subunit methyltransferase G from Borrelia hermsii (strain HS1 / DAH).